The chain runs to 489 residues: Rhamnulokinase (489 aa).

An ATP-binding site is contributed by 13–17; it reads ASSGR. C68 and C222 form a disulfide bridge. Residues G83 and 236 to 238 contribute to the substrate site; that span reads HDT. The active-site Proton acceptor is D237. T259 is a binding site for ATP. N296 contributes to the substrate binding site. Q304 serves as a coordination point for ATP. C353 and C370 are disulfide-bonded. Residue G402 coordinates ATP. C413 and C417 are joined by a disulfide.

Belongs to the rhamnulokinase family. Requires Mg(2+) as cofactor.

It catalyses the reaction L-rhamnulose + ATP = L-rhamnulose 1-phosphate + ADP + H(+). It participates in carbohydrate degradation; L-rhamnose degradation; glycerone phosphate from L-rhamnose: step 2/3. In terms of biological role, involved in the catabolism of L-rhamnose (6-deoxy-L-mannose). Catalyzes the transfer of the gamma-phosphate group from ATP to the 1-hydroxyl group of L-rhamnulose to yield L-rhamnulose 1-phosphate. This is Rhamnulokinase from Salmonella schwarzengrund (strain CVM19633).